The following is a 213-amino-acid chain: Adenylate kinase (213 aa).

10–15 is an ATP binding site; that stretch reads GAGKGT. An NMP region spans residues 30 to 59; it reads STGDMFRAAMANQTEMGILAKSYIDKGDLV. Residues T31, R36, 57 to 59, 86 to 89, and Q93 each bind AMP; these read DLV and GYPR. An LID region spans residues 127-160; sequence GRIIHKETGETFHKVFNPPVGDYKEEDFYQREDD. ATP is bound by residues R128 and 137-138; that span reads TF. Residues R157 and R168 each contribute to the AMP site. ATP is bound at residue Q196.

This sequence belongs to the adenylate kinase family. As to quaternary structure, monomer.

Its subcellular location is the cytoplasm. It carries out the reaction AMP + ATP = 2 ADP. Its pathway is purine metabolism; AMP biosynthesis via salvage pathway; AMP from ADP: step 1/1. In terms of biological role, catalyzes the reversible transfer of the terminal phosphate group between ATP and AMP. Plays an important role in cellular energy homeostasis and in adenine nucleotide metabolism. This Streptococcus suis (strain 98HAH33) protein is Adenylate kinase.